The sequence spans 239 residues: Ribonuclease Le2 (239 aa).

5 cysteine pairs are disulfide-bonded: Cys5/Cys22, Cys13/Cys58, Cys21/Cys126, Cys66/Cys118, and Cys191/Cys225. Active-site residues include His51, Glu111, and His115.

Belongs to the RNase T2 family.

It catalyses the reaction a ribonucleotidyl-ribonucleotide-RNA + H2O = a 3'-end 3'-phospho-ribonucleotide-RNA + a 5'-end dephospho-ribonucleoside-RNA + H(+). This is a base non-specific and adenylic acid preferential ribonuclease. This chain is Ribonuclease Le2, found in Lentinula edodes (Shiitake mushroom).